Consider the following 428-residue polypeptide: Protein CANDIDATE G-PROTEIN COUPLED RECEPTOR 6 (428 aa).

The N-terminal stretch at Met-1–Ala-22 is a signal peptide. N-linked (GlcNAc...) asparagine glycans are attached at residues Asn-31, Asn-89, and Asn-157. Helical transmembrane passes span Leu-173–Trp-193, Ile-202–Val-222, Ile-238–Ile-258, Leu-276–Glu-296, Ile-310–Met-330, Phe-356–Met-376, and Val-385–Phe-405.

It belongs to the LU7TM family.

It localises to the membrane. Functionally, G-protein coupled receptor. Plays a role in plants and microbes interactions. The polypeptide is Protein CANDIDATE G-PROTEIN COUPLED RECEPTOR 6 (Arabidopsis thaliana (Mouse-ear cress)).